The chain runs to 409 residues: Arginine deiminase (409 aa).

Cys-399 (amidino-cysteine intermediate) is an active-site residue.

The protein belongs to the arginine deiminase family.

It localises to the cytoplasm. It catalyses the reaction L-arginine + H2O = L-citrulline + NH4(+). Its pathway is amino-acid degradation; L-arginine degradation via ADI pathway; carbamoyl phosphate from L-arginine: step 1/2. This Streptococcus pneumoniae (strain 70585) protein is Arginine deiminase.